Consider the following 230-residue polypeptide: Alpha-S1-casein (230 aa).

Positions 1 to 15 (MKLLILTCLVAVALA) are cleaved as a signal peptide. Phosphoserine is present on residues Ser33, Ser83, Ser85, Ser86, Ser87, and Ser88. The segment covering 60-83 (DELKDTRNEPTEDHIMEDTERKES) has biased composition (basic and acidic residues). Disordered regions lie at residues 60–103 (DELK…DILK) and 211–230 (TPEG…PQWW). Residues 84 to 96 (GSSSSEEVVSSTT) are compositionally biased toward low complexity.

It belongs to the alpha-casein family. Mammary gland specific. Secreted in milk.

It localises to the secreted. Important role in the capacity of milk to transport calcium phosphate. The protein is Alpha-S1-casein (CSN1S1) of Camelus dromedarius (Dromedary).